The primary structure comprises 129 residues: Small ribosomal subunit protein uS11 (129 aa).

It belongs to the universal ribosomal protein uS11 family. As to quaternary structure, part of the 30S ribosomal subunit. Interacts with proteins S7 and S18. Binds to IF-3.

Located on the platform of the 30S subunit, it bridges several disparate RNA helices of the 16S rRNA. Forms part of the Shine-Dalgarno cleft in the 70S ribosome. This chain is Small ribosomal subunit protein uS11, found in Zymomonas mobilis subsp. mobilis (strain ATCC 31821 / ZM4 / CP4).